The primary structure comprises 552 residues: Metal transporter Nramp6.1 (552 aa).

N-linked (GlcNAc...) asparagine glycosylation occurs at N11. Helical transmembrane passes span 55 to 75 (FLSY…PGNL), 88 to 108 (ELLW…SLAA), 133 to 155 (CLWL…GTAF), 159 to 181 (ILFN…LLLG), 189 to 209 (KLEL…FGEM), 238 to 258 (IALL…ALVL), and 275 to 295 (YFLI…LAVI). N-linked (GlcNAc...) asparagine glycosylation is present at N306. 5 helical membrane passes run 338–358 (IYAI…TYAG), 377–397 (LVTR…GGSS), 402–422 (LIII…IPLL), 438–458 (IYII…NIYY), and 478–498 (VFIG…VIYL). A disordered region spans residues 511–552 (PNKNDPQQQTNMENGLAKSTEGPEMVDRAPYREDLADIPLPE). Positions 514-523 (NDPQQQTNME) are enriched in polar residues. The span at 535 to 545 (MVDRAPYREDL) shows a compositional bias: basic and acidic residues.

This sequence belongs to the NRAMP (TC 2.A.55) family.

It is found in the membrane. Functionally, probable divalent metal transporter. This chain is Metal transporter Nramp6.1, found in Populus trichocarpa (Western balsam poplar).